The sequence spans 208 residues: FMN-dependent NADH:quinone oxidoreductase (208 aa).

Residues serine 10, serine 16–serine 18, methionine 94–phenylalanine 97, and serine 138–glycine 141 each bind FMN.

It belongs to the azoreductase type 1 family. Homodimer. Requires FMN as cofactor.

The catalysed reaction is 2 a quinone + NADH + H(+) = 2 a 1,4-benzosemiquinone + NAD(+). It carries out the reaction N,N-dimethyl-1,4-phenylenediamine + anthranilate + 2 NAD(+) = 2-(4-dimethylaminophenyl)diazenylbenzoate + 2 NADH + 2 H(+). Functionally, quinone reductase that provides resistance to thiol-specific stress caused by electrophilic quinones. Also exhibits azoreductase activity. Catalyzes the reductive cleavage of the azo bond in aromatic azo compounds to the corresponding amines. This chain is FMN-dependent NADH:quinone oxidoreductase, found in Hyphomonas neptunium (strain ATCC 15444).